A 485-amino-acid chain; its full sequence is GTPase Der (485 aa).

EngA-type G domains are found at residues 3–167 and 176–349; these read PTIA…PEPE and PVFA…NAAM. Residues 9–16, 56–60, 119–122, 182–189, 229–233, and 294–297 contribute to the GTP site; these read GRPNVGKS, DTGGF, NKGE, DTAGV, and NKWD. In terms of domain architecture, KH-like spans 350–434; sequence IKMPTPKITR…PLRIQYNVSE (85 aa). The tract at residues 435–485 is disordered; that stretch reads NPYENADDKPKKKPLRRVSLSNRIEKREGRKEEKNRFKKKTKVSVKKQFSK. Residues 457–469 are compositionally biased toward basic and acidic residues; that stretch reads RIEKREGRKEEKN. The span at 470–485 shows a compositional bias: basic residues; that stretch reads RFKKKTKVSVKKQFSK.

The protein belongs to the TRAFAC class TrmE-Era-EngA-EngB-Septin-like GTPase superfamily. EngA (Der) GTPase family. In terms of assembly, associates with the 50S ribosomal subunit.

In terms of biological role, GTPase that plays an essential role in the late steps of ribosome biogenesis. This chain is GTPase Der, found in Neisseria meningitidis serogroup A / serotype 4A (strain DSM 15465 / Z2491).